We begin with the raw amino-acid sequence, 232 residues long: Peptidyl-prolyl cis-trans isomerase CYP26-1 (232 aa).

The PPIase cyclophilin-type domain maps to Phe-7–Glu-166. A glycan (N-linked (GlcNAc...) asparagine) is linked at Asn-108. Residues Tyr-212–Val-232 traverse the membrane as a helical segment.

The protein belongs to the cyclophilin-type PPIase family. As to expression, expressed only in flowers.

The protein localises to the membrane. The catalysed reaction is [protein]-peptidylproline (omega=180) = [protein]-peptidylproline (omega=0). Functionally, PPIases accelerate the folding of proteins. It catalyzes the cis-trans isomerization of proline imidic peptide bonds in oligopeptides. This chain is Peptidyl-prolyl cis-trans isomerase CYP26-1 (CYP26-1), found in Arabidopsis thaliana (Mouse-ear cress).